The chain runs to 760 residues: 5-methyltetrahydropteroyltriglutamate--homocysteine methyltransferase (760 aa).

Residues 24-27 (RELK) and lysine 118 each bind 5-methyltetrahydropteroyltri-L-glutamate. Residues 437–439 (IGS) and glutamate 490 contribute to the L-homocysteine site. L-methionine contacts are provided by residues 437-439 (IGS) and glutamate 490. 5-methyltetrahydropteroyltri-L-glutamate-binding positions include 521–522 (RC) and tryptophan 567. Aspartate 605 lines the L-homocysteine pocket. Aspartate 605 contributes to the L-methionine binding site. Glutamate 611 is a binding site for 5-methyltetrahydropteroyltri-L-glutamate. Zn(2+) is bound by residues histidine 647, cysteine 649, and glutamate 671. Residue histidine 700 is the Proton donor of the active site. Zn(2+) is bound at residue cysteine 732.

Belongs to the vitamin-B12 independent methionine synthase family. Zn(2+) serves as cofactor.

The catalysed reaction is 5-methyltetrahydropteroyltri-L-glutamate + L-homocysteine = tetrahydropteroyltri-L-glutamate + L-methionine. Its pathway is amino-acid biosynthesis; L-methionine biosynthesis via de novo pathway; L-methionine from L-homocysteine (MetE route): step 1/1. Its function is as follows. Catalyzes the transfer of a methyl group from 5-methyltetrahydrofolate to homocysteine resulting in methionine formation. The sequence is that of 5-methyltetrahydropteroyltriglutamate--homocysteine methyltransferase from Mycobacterium leprae (strain TN).